Consider the following 146-residue polypeptide: Protein US8.5 (146 aa).

Residues 63–93 (LIAIADARGDPPETLPPGAGGAAPACRRPPR) form a disordered region. The segment covering 84–93 (AAPACRRPPR) has biased composition (low complexity).

Belongs to the HHV-1 US8.5 protein family. In terms of processing, phosphorylated.

The protein localises to the host nucleus. It is found in the host nucleolus. This chain is Protein US8.5, found in Human herpesvirus 2 (strain HG52) (HHV-2).